Consider the following 311-residue polypeptide: Giardin subunit gamma (311 aa).

Residues 185–233 (GLQTEINSLEAIIEREFAQAANRLNQEVSNFKESFDASERNIKLQKKHV) are a coiled coil.

Interacts with EB1.

Its subcellular location is the cytoplasm. The protein localises to the cytoskeleton. Functionally, giardins are involved in parasite attachment to the intestinal mucosa and in the cytoskeletal disassembly and reassembly that marks the transition from infectious trophozoite to transmissible cyst. They may interact with other cytoskeletal proteins such as microtubules in the microribbons or crossbridges, to maintain the integrity of the ventral disk. Involved in formation of the ventral disk. This Giardia intestinalis (Giardia lamblia) protein is Giardin subunit gamma.